Consider the following 652-residue polypeptide: DNA ligase (652 aa).

Residues 29 to 33 (DSEYD), 78 to 79 (SL), and E107 each bind NAD(+). K109 functions as the N6-AMP-lysine intermediate in the catalytic mechanism. Positions 130, 164, 278, and 302 each coordinate NAD(+). Zn(2+) contacts are provided by C395, C398, C413, and C418. The BRCT domain maps to 577–652 (VADAALSGLT…VRDEAWLESL (76 aa)).

Belongs to the NAD-dependent DNA ligase family. LigA subfamily. Requires Mg(2+) as cofactor. It depends on Mn(2+) as a cofactor.

The enzyme catalyses NAD(+) + (deoxyribonucleotide)n-3'-hydroxyl + 5'-phospho-(deoxyribonucleotide)m = (deoxyribonucleotide)n+m + AMP + beta-nicotinamide D-nucleotide.. Functionally, DNA ligase that catalyzes the formation of phosphodiester linkages between 5'-phosphoryl and 3'-hydroxyl groups in double-stranded DNA using NAD as a coenzyme and as the energy source for the reaction. It is essential for DNA replication and repair of damaged DNA. The protein is DNA ligase of Streptococcus pneumoniae serotype 4 (strain ATCC BAA-334 / TIGR4).